A 910-amino-acid chain; its full sequence is Protein translocase subunit SecA (910 aa).

Residues Q87, G105–T109, and D501 each bind ATP. Positions 894, 896, 905, and 906 each coordinate Zn(2+).

This sequence belongs to the SecA family. As to quaternary structure, monomer and homodimer. Part of the essential Sec protein translocation apparatus which comprises SecA, SecYEG and auxiliary proteins SecDF-YajC and YidC. Requires Zn(2+) as cofactor.

It localises to the cell inner membrane. The protein localises to the cytoplasm. The enzyme catalyses ATP + H2O + cellular proteinSide 1 = ADP + phosphate + cellular proteinSide 2.. Part of the Sec protein translocase complex. Interacts with the SecYEG preprotein conducting channel. Has a central role in coupling the hydrolysis of ATP to the transfer of proteins into and across the cell membrane, serving both as a receptor for the preprotein-SecB complex and as an ATP-driven molecular motor driving the stepwise translocation of polypeptide chains across the membrane. The chain is Protein translocase subunit SecA from Acidiphilium cryptum (strain JF-5).